The chain runs to 638 residues: Threonine--tRNA ligase (638 aa).

Residues 1 to 61 enclose the TGS domain; that stretch reads MPIITLPDGS…NSDSKVVIIT (61 aa). Residues 242-533 are catalytic; the sequence is DHRKLGKKHS…LIEQYEAKFP (292 aa). Zn(2+) contacts are provided by Cys333, His384, and His510.

The protein belongs to the class-II aminoacyl-tRNA synthetase family. As to quaternary structure, homodimer. It depends on Zn(2+) as a cofactor.

The protein resides in the cytoplasm. It catalyses the reaction tRNA(Thr) + L-threonine + ATP = L-threonyl-tRNA(Thr) + AMP + diphosphate + H(+). Catalyzes the attachment of threonine to tRNA(Thr) in a two-step reaction: L-threonine is first activated by ATP to form Thr-AMP and then transferred to the acceptor end of tRNA(Thr). Also edits incorrectly charged L-seryl-tRNA(Thr). This chain is Threonine--tRNA ligase, found in Prochlorococcus marinus (strain MIT 9215).